Consider the following 296-residue polypeptide: NAD kinase (296 aa).

The active-site Proton acceptor is Asp74. Residues 74–75 (DG), 148–149 (ND), Arg176, Asp178, and 189–194 (TAYALS) each bind NAD(+).

It belongs to the NAD kinase family. The cofactor is a divalent metal cation.

It localises to the cytoplasm. The catalysed reaction is NAD(+) + ATP = ADP + NADP(+) + H(+). Functionally, involved in the regulation of the intracellular balance of NAD and NADP, and is a key enzyme in the biosynthesis of NADP. Catalyzes specifically the phosphorylation on 2'-hydroxyl of the adenosine moiety of NAD to yield NADP. The protein is NAD kinase of Nitrosomonas europaea (strain ATCC 19718 / CIP 103999 / KCTC 2705 / NBRC 14298).